Consider the following 401-residue polypeptide: Tyrosine--tRNA ligase (401 aa).

A 'HIGH' region motif is present at residues 42–51 (PTAPDLHLGH). The short motif at 226–230 (KMSKS) is the 'KMSKS' region element. Lys-229 contributes to the ATP binding site. The 62-residue stretch at 336-397 (IALAQLLKQI…GKRRIAKLSI (62 aa)) folds into the S4 RNA-binding domain.

The protein belongs to the class-I aminoacyl-tRNA synthetase family. TyrS type 2 subfamily. In terms of assembly, homodimer.

Its subcellular location is the cytoplasm. The catalysed reaction is tRNA(Tyr) + L-tyrosine + ATP = L-tyrosyl-tRNA(Tyr) + AMP + diphosphate + H(+). Catalyzes the attachment of tyrosine to tRNA(Tyr) in a two-step reaction: tyrosine is first activated by ATP to form Tyr-AMP and then transferred to the acceptor end of tRNA(Tyr). The sequence is that of Tyrosine--tRNA ligase from Legionella pneumophila (strain Paris).